The sequence spans 105 residues: Protamine-2 (105 aa).

The tract at residues 1–74 (MVRYRMRSPS…RRSCRRRRRH (74 aa)) is disordered. Residues Ser8 and Ser10 each carry the phosphoserine modification. Over residues 33–42 (NPERVEDYGR) the composition is skewed to basic and acidic residues. A compositionally biased stretch (basic residues) spans 43–74 (THRGHHRHRRCSRKRLHRIHKRRRSCRRRRRH).

Belongs to the protamine P2 family. As to quaternary structure, interacts with TDRP. In terms of processing, proteolytic processing into mature chains is required for histone eviction during spermatogenesis. Transition proteins (TNP1 and TNP2) are required for processing. In terms of tissue distribution, testis.

It is found in the nucleus. The protein resides in the chromosome. Functionally, protamines substitute for histones in the chromatin of sperm during the haploid phase of spermatogenesis. They compact sperm DNA into a highly condensed, stable and inactive complex. This chain is Protamine-2 (Prm2), found in Rattus tunneyi (Tunney's rat).